We begin with the raw amino-acid sequence, 106 residues long: Large ribosomal subunit protein uL24 (106 aa).

It belongs to the universal ribosomal protein uL24 family. As to quaternary structure, part of the 50S ribosomal subunit.

One of two assembly initiator proteins, it binds directly to the 5'-end of the 23S rRNA, where it nucleates assembly of the 50S subunit. Its function is as follows. One of the proteins that surrounds the polypeptide exit tunnel on the outside of the subunit. The protein is Large ribosomal subunit protein uL24 of Clostridium acetobutylicum (strain ATCC 824 / DSM 792 / JCM 1419 / IAM 19013 / LMG 5710 / NBRC 13948 / NRRL B-527 / VKM B-1787 / 2291 / W).